Reading from the N-terminus, the 1463-residue chain is Probable ATP-dependent RNA helicase spindle-E (1463 aa).

In terms of domain architecture, Helicase ATP-binding spans 131 to 296; it reads LKAIRENPVV…FKIPGPNSLF (166 aa). 144–151 serves as a coordination point for ATP; the sequence is GMTGCGKT. Positions 243–246 match the DEAH box motif; it reads DEVH. The Helicase C-terminal domain maps to 348–531; sequence VCDRFIDEFE…NVVLKTKLLD (184 aa). The Tudor domain maps to 951-1016; it reads AFKQRDIVAA…QLRGTPLDMF (66 aa).

Belongs to the DEAD box helicase family. DEAH subfamily.

Its subcellular location is the cytoplasm. It carries out the reaction ATP + H2O = ADP + phosphate + H(+). Probable ATP-binding RNA helicase which plays a central role during gametogenesis by repressing transposable elements and preventing their mobilization, which is essential for the germline integrity. Acts via the piRNA metabolic process, which mediates the repression of transposable elements during meiosis by forming complexes composed of piRNAs and Piwi proteins and govern the methylation and subsequent repression of transposons. The chain is Probable ATP-dependent RNA helicase spindle-E (spn-E) from Anopheles gambiae (African malaria mosquito).